The sequence spans 93 residues: Alpha-defensin 1 (93 aa).

A signal peptide spans 1-19; it reads MKKLVLLFALVLLGFQVQA. Positions 20-58 are excised as a propeptide; sequence DSIQNTDEETKTEEQPGEEDQAVSVSFGDPEGTSLQEES. Positions 24–54 are disordered; that stretch reads NTDEETKTEEQPGEEDQAVSVSFGDPEGTSL. Intrachain disulfides connect Cys64/Cys92, Cys66/Cys81, and Cys71/Cys91.

The protein belongs to the alpha-defensin family. In terms of tissue distribution, paneth cells of the small bowel.

It is found in the secreted. In terms of biological role, probably contributes to the antimicrobial barrier function of the small bowel mucosa. Has antibacterial activity against attenuated mutants of S.typhimurium. This is Alpha-defensin 1 (Defa1) from Mus musculus (Mouse).